The chain runs to 76 residues: Sulfur carrier protein TusA (76 aa).

Cys14 acts as the Cysteine persulfide intermediate in catalysis.

The protein belongs to the sulfur carrier protein TusA family. In terms of assembly, interacts with IscS.

Its subcellular location is the cytoplasm. It participates in tRNA modification. Sulfur carrier protein involved in sulfur trafficking in the cell. Part of a sulfur-relay system required for 2-thiolation during synthesis of 2-thiouridine of the modified wobble base 5-methylaminomethyl-2-thiouridine (mnm(5)s(2)U) in tRNA. Interacts with IscS and stimulates its cysteine desulfurase activity. Accepts an activated sulfur from IscS, which is then transferred to TusD, and thus determines the direction of sulfur flow from IscS to 2-thiouridine formation. Also appears to be involved in sulfur transfer for the biosynthesis of molybdopterin. In Buchnera aphidicola subsp. Acyrthosiphon pisum (strain 5A), this protein is Sulfur carrier protein TusA.